The following is a 278-amino-acid chain: ADP-dependent (S)-NAD(P)H-hydrate dehydratase (278 aa).

A YjeF C-terminal domain is found at 5-272 (TTEIVSRTII…TRIPTYMHRF (268 aa)). Residues alanine 40, glycine 103, and histidine 152 each contribute to the (6S)-NADPHX site. Residue glycine 214 coordinates AMP. Residue aspartate 215 participates in (6S)-NADPHX binding.

Belongs to the NnrD/CARKD family. As to quaternary structure, homotetramer. It depends on Mg(2+) as a cofactor.

It catalyses the reaction (6S)-NADHX + ADP = AMP + phosphate + NADH + H(+). It carries out the reaction (6S)-NADPHX + ADP = AMP + phosphate + NADPH + H(+). Its function is as follows. Catalyzes the dehydration of the S-form of NAD(P)HX at the expense of ADP, which is converted to AMP. Together with NAD(P)HX epimerase, which catalyzes the epimerization of the S- and R-forms, the enzyme allows the repair of both epimers of NAD(P)HX, a damaged form of NAD(P)H that is a result of enzymatic or heat-dependent hydration. The chain is ADP-dependent (S)-NAD(P)H-hydrate dehydratase from Lactiplantibacillus plantarum (strain ATCC BAA-793 / NCIMB 8826 / WCFS1) (Lactobacillus plantarum).